Here is a 280-residue protein sequence, read N- to C-terminus: Eukaryotic translation initiation factor 3 subunit F-1 (280 aa).

The 131-residue stretch at 8 to 138 folds into the MPN domain; it reads VRVHPVVLFQ…LRSYVCIQLG (131 aa).

Belongs to the eIF-3 subunit F family. In terms of assembly, component of the eukaryotic translation initiation factor 3 (eIF-3) complex. The eIF-3 complex interacts with pix.

It localises to the cytoplasm. Component of the eukaryotic translation initiation factor 3 (eIF-3) complex, which is involved in protein synthesis of a specialized repertoire of mRNAs and, together with other initiation factors, stimulates binding of mRNA and methionyl-tRNAi to the 40S ribosome. The eIF-3 complex specifically targets and initiates translation of a subset of mRNAs involved in cell proliferation. The polypeptide is Eukaryotic translation initiation factor 3 subunit F-1 (Drosophila persimilis (Fruit fly)).